Consider the following 663-residue polypeptide: DNA ligase (663 aa).

NAD(+) contacts are provided by residues 33–37 (DYSYD), 82–83 (SI), and glutamate 112. Lysine 114 acts as the N6-AMP-lysine intermediate in catalysis. The NAD(+) site is built by arginine 135, glutamate 171, lysine 285, and lysine 309. Zn(2+) is bound by residues cysteine 403, cysteine 406, cysteine 419, and cysteine 424. The region spanning 581–663 (DKEAPLQGKV…LRILDAKSVS (83 aa)) is the BRCT domain.

The protein belongs to the NAD-dependent DNA ligase family. LigA subfamily. Requires Mg(2+) as cofactor. Mn(2+) serves as cofactor.

The enzyme catalyses NAD(+) + (deoxyribonucleotide)n-3'-hydroxyl + 5'-phospho-(deoxyribonucleotide)m = (deoxyribonucleotide)n+m + AMP + beta-nicotinamide D-nucleotide.. DNA ligase that catalyzes the formation of phosphodiester linkages between 5'-phosphoryl and 3'-hydroxyl groups in double-stranded DNA using NAD as a coenzyme and as the energy source for the reaction. It is essential for DNA replication and repair of damaged DNA. In Chlamydia trachomatis serovar A (strain ATCC VR-571B / DSM 19440 / HAR-13), this protein is DNA ligase.